The sequence spans 210 residues: Glutathione S-transferase P 1 (210 aa).

A GST N-terminal domain is found at 1 to 80; sequence PEYTIIYFNA…LLARNHDLYG (80 aa). Glutathione contacts are provided by residues Tyr7, Arg13, Trp38, Lys44, 51-52, and 64-65; these read QL and QS. A GST C-terminal domain is found at 82 to 203; it reads NPREASLIDM…SSDAHKKRPI (122 aa).

It belongs to the GST superfamily. Pi family. Homodimer.

The protein localises to the cytoplasm. The protein resides in the mitochondrion. It is found in the nucleus. It carries out the reaction RX + glutathione = an S-substituted glutathione + a halide anion + H(+). In terms of biological role, conjugation of reduced glutathione to a wide number of exogenous and endogenous hydrophobic electrophiles. In Bufo bufo (European toad), this protein is Glutathione S-transferase P 1.